Consider the following 1055-residue polypeptide: Leukotoxin (1055 aa).

Residues Q11–L49 adopt a coiled-coil conformation. Cholesterol recognition/amino acid consensus (CRAC) region stretches follow at residues L334–R340 and V502–K506. Hemolysin-type calcium-binding repeat units lie at residues I721–F738, H739–L756, Y757–L774, Y775–L792, D793–L810, R811–L828, and D829–Y846. Positions G795–G815 are disordered. A disordered region spans residues K990–K1009. A compositionally biased stretch (low complexity) spans S993 to L1006.

The protein belongs to the RTX prokaryotic toxin (TC 1.C.11) family. As to quaternary structure, interacts specifically with the superoxide dismutase [Cu-Zn]. This interaction may protect LtxA from reactive oxygen species and reactive nitrogen species produced by host inflammatory cells during disease. Interacts with the human leukocyte adhesion glycoprotein LFA-1 (ITGAL-ITGB2). Post-translationally, acylated at Lys-562 and Lys-687 by LtxC. This modification is required for full activity. Isolated methyl esters contain palmitoyl and palmitolyl fatty acyl groups with smaller quantities of myristic and stearic fatty acids.

The protein resides in the cell outer membrane. The protein localises to the secreted. In terms of biological role, virulence factor that plays an important role in immune evasion. Lyses human lymphocytes and monocytes. Binds to the LFA-1 integrin on the surface of the host cell and to cholesterol-containing membranes, which probably results in large LtxA-LFA-1 clusters in lipid rafts. Also shows beta-hemolytic activity on certain types of growth media. The polypeptide is Leukotoxin (Aggregatibacter actinomycetemcomitans (Actinobacillus actinomycetemcomitans)).